The primary structure comprises 289 residues: 4-diphosphocytidyl-2-C-methyl-D-erythritol kinase (289 aa).

Residue Lys-11 is part of the active site. 95–105 (PMGGGIGGGSS) is a binding site for ATP. Asp-137 is an active-site residue.

This sequence belongs to the GHMP kinase family. IspE subfamily.

The catalysed reaction is 4-CDP-2-C-methyl-D-erythritol + ATP = 4-CDP-2-C-methyl-D-erythritol 2-phosphate + ADP + H(+). It participates in isoprenoid biosynthesis; isopentenyl diphosphate biosynthesis via DXP pathway; isopentenyl diphosphate from 1-deoxy-D-xylulose 5-phosphate: step 3/6. Functionally, catalyzes the phosphorylation of the position 2 hydroxy group of 4-diphosphocytidyl-2C-methyl-D-erythritol. In Aeromonas salmonicida (strain A449), this protein is 4-diphosphocytidyl-2-C-methyl-D-erythritol kinase.